A 589-amino-acid polypeptide reads, in one-letter code: Leucine-rich repeat and immunoglobulin-like domain-containing nogo receptor-interacting protein 3 (589 aa).

A signal peptide spans 1 to 23 (MTCWLHMLGLHLLLLPTAPLAAG). Residues 24–53 (CPARCECSASTRTVACGRRRLTAIPEGIPA) form the LRRNT domain. The Extracellular portion of the chain corresponds to 24–528 (CPARCECSAS…LDLTTILVST (505 aa)). LRR repeat units follow at residues 54-75 (ETRM…DLAS), 78-99 (TLEE…AFAN), 102-123 (RLRV…VFTH), 126-147 (SLTL…SFQD), 150-171 (SLQR…AFAG), 174-195 (GLAE…SLGH), 206-227 (HLAI…SHLE), 246-267 (NLTS…ALRQ), 270-291 (HLTC…SFRD), 294-315 (RLRE…AFVG), and 318-339 (QIRL…TFHS). N184 is a glycosylation site (N-linked (GlcNAc...) asparagine). N-linked (GlcNAc...) asparagine glycans are attached at residues N246, N256, and N275. Residue N323 is glycosylated (N-linked (GlcNAc...) asparagine). An LRRCT domain is found at 351 to 405 (NPLACDCRLLWIVQRRKTLNFDGRLPACATPAEVRGDALHNLPDSVLFEYFVCRK). Positions 406–495 (PKIRERRLQH…GNDTYFATLT (90 aa)) constitute an Ig-like C2-type domain. C428 and C479 are disulfide-bonded. N487, N501, and N509 each carry an N-linked (GlcNAc...) asparagine glycan. The chain crosses the membrane as a helical span at residues 529-549 (AMGCITFLGVVLFCFLLLFVW). The Cytoplasmic portion of the chain corresponds to 550-589 (SRGRGQHKNNFSVEYSFRKVDGPAAAAGQGGARKFNMKMI).

It localises to the membrane. This is Leucine-rich repeat and immunoglobulin-like domain-containing nogo receptor-interacting protein 3 (Lingo3) from Mus musculus (Mouse).